We begin with the raw amino-acid sequence, 693 residues long: Zinc finger BED domain-containing protein 5 (693 aa).

The BED-type zinc-finger motif lies at 108–164 (RKYDESYLSFGFTYFGNRDAPHAQCVLCKKILSNSSLAPSKLRRHLETKHAAYKDKD). Positions 132, 135, 152, and 157 each coordinate Zn(2+).

The chain is Zinc finger BED domain-containing protein 5 (ZBED5) from Homo sapiens (Human).